Reading from the N-terminus, the 382-residue chain is 2-heptyl-3-hydroxy-4(1H)-quinolone synthase (382 aa).

Belongs to the 3-hydroxybenzoate 6-hydroxylase family.

The catalysed reaction is 2-heptyl-4(1H)-quinolone + NADH + O2 + H(+) = 2-heptyl-3-hydroxy-4(1H)-quinolone + NAD(+) + H2O. In terms of biological role, involved in the terminal step of the biosynthesis of quinolone which in addition to serve as a potent signal for quorum sensing, chelates iron and promotes the formation of membrane vesicles (MVs). Catalyzes the hydroxylation of 2-heptyl-4-quinolone (C7-HHQ) to yield 2-heptyl-3-hydroxy-4-quinolone (PQS). PqsH is also able to hydroxylate HHQ analogs having alkyl side-chain lengths of 3 (C3-HHQ), 5 (C5-HHQ) and 9 (C9-HHQ) carbons, however catalytic efficiencies are significantly reduced for substrates with alkyl side-chain lengths below 7 carbons. In Pseudomonas aeruginosa (strain UCBPP-PA14), this protein is 2-heptyl-3-hydroxy-4(1H)-quinolone synthase (pqsH).